The sequence spans 601 residues: Potassium channel KAT2 (601 aa).

Topologically, residues 1–42 (METISNIFHNDPLPPLGARANQSIKLRKFIISPYDSRYRTWE) are cytoplasmic. Residues 43–63 (TFLLVLVVYSAWICPFELAYL) form a helical membrane-spanning segment. Over 64 to 71 (RNLSWKVS) the chain is Extracellular. The helical transmembrane segment at 72–92 (LVDNIIDSFFAIDIILTFFLA) threads the bilayer. Residues 93 to 112 (YLDQKSYLLVDDPKRIVARY) are Cytoplasmic-facing. Residues 113–133 (FSSWFLFDVCSTIPYQLLGQI) traverse the membrane as a helical segment. Residues 134–144 (FKKHENGLAYR) are Extracellular-facing. Residues 145–165 (LLSMLRLWRLRRLSELFARLE) traverse the membrane as a helical; Voltage-sensor segment. At 166–179 (KDIRLNYYWIRCTK) the chain is on the cytoplasmic side. The chain crosses the membrane as a helical span at residues 180–200 (LISVTLFAVHCSGCFNYLIAD). The Extracellular portion of the chain corresponds to 201-227 (RYPNPARTWIGAAIPNYRSQNLWVRYV). Positions 228-247 (TAIYWSITTLTTTGYGDLHA) form an intramembrane region, pore-forming. Residues 248 to 251 (ENQR) lie on the Extracellular side of the membrane. The chain crosses the membrane as a helical span at residues 252-272 (EMLFSICYMLFNLGLTAYLIG). The Cytoplasmic portion of the chain corresponds to 273–601 (NMTNLVVQGS…DGDHLFFMEI (329 aa)). 356–475 (LFHGVSFTCM…RVILNNLSQK (120 aa)) serves as a coordination point for a nucleoside 3',5'-cyclic phosphate. The KHA domain maps to 530-601 (RVTIHMYSQR…DGDHLFFMEI (72 aa)).

This sequence belongs to the potassium channel family. Plant (TC 1.A.1.4) subfamily.

Its subcellular location is the membrane. Probable inward-rectifying potassium channel. Assuming opened or closed conformations in response to the voltage difference across the membrane, the channel is activated by hyperpolarization. This Oryza sativa subsp. japonica (Rice) protein is Potassium channel KAT2.